The chain runs to 312 residues: Aspartate carbamoyltransferase catalytic subunit (312 aa).

Carbamoyl phosphate contacts are provided by R58 and T59. Residue K86 participates in L-aspartate binding. Carbamoyl phosphate-binding residues include R108, H136, and Q139. L-aspartate-binding residues include R169 and R223. Carbamoyl phosphate-binding residues include G264 and P265.

Belongs to the aspartate/ornithine carbamoyltransferase superfamily. ATCase family. In terms of assembly, heterododecamer (2C3:3R2) of six catalytic PyrB chains organized as two trimers (C3), and six regulatory PyrI chains organized as three dimers (R2).

The catalysed reaction is carbamoyl phosphate + L-aspartate = N-carbamoyl-L-aspartate + phosphate + H(+). It functions in the pathway pyrimidine metabolism; UMP biosynthesis via de novo pathway; (S)-dihydroorotate from bicarbonate: step 2/3. Its function is as follows. Catalyzes the condensation of carbamoyl phosphate and aspartate to form carbamoyl aspartate and inorganic phosphate, the committed step in the de novo pyrimidine nucleotide biosynthesis pathway. In Syntrophomonas wolfei subsp. wolfei (strain DSM 2245B / Goettingen), this protein is Aspartate carbamoyltransferase catalytic subunit.